The primary structure comprises 376 residues: Anhydro-N-acetylmuramic acid kinase (376 aa).

16–23 is an ATP binding site; that stretch reads GTSMDGVD.

Belongs to the anhydro-N-acetylmuramic acid kinase family.

The enzyme catalyses 1,6-anhydro-N-acetyl-beta-muramate + ATP + H2O = N-acetyl-D-muramate 6-phosphate + ADP + H(+). The protein operates within amino-sugar metabolism; 1,6-anhydro-N-acetylmuramate degradation. Its pathway is cell wall biogenesis; peptidoglycan recycling. In terms of biological role, catalyzes the specific phosphorylation of 1,6-anhydro-N-acetylmuramic acid (anhMurNAc) with the simultaneous cleavage of the 1,6-anhydro ring, generating MurNAc-6-P. Is required for the utilization of anhMurNAc either imported from the medium or derived from its own cell wall murein, and thus plays a role in cell wall recycling. The chain is Anhydro-N-acetylmuramic acid kinase from Paraburkholderia xenovorans (strain LB400).